The primary structure comprises 584 residues: Breast carcinoma-amplified sequence 1 (584 aa).

Disordered stretches follow at residues 1–29, 59–280, and 297–377; these read MGNQ…NASA, VATS…AAAI, and PNKA…GKLF. Composition is skewed to polar residues over residues 59–69 and 112–128; these read VATSSPETTEI and ADSS…SNKA. Residues serine 124 and serine 192 each carry the phosphoserine modification. 3 stretches are compositionally biased toward basic and acidic residues: residues 186-226, 238-252, and 300-311; these read SKPK…KVDE, PAGK…KEGQ, and AETKKDPEDTGA. Serine 314 bears the Phosphoserine mark. Residues 314-354 are compositionally biased toward polar residues; sequence SPTTSADLKSDKANFTSQETQGAGKNSKGCNPSGHTQSVTT. Residues 357 to 366 are compositionally biased toward basic and acidic residues; sequence PAKEGTKEKS. A phosphoserine mark is found at serine 381 and serine 399. Residues 415-584 form a disordered region; the sequence is TVDLNEGDAA…VSIGPVGKSK (170 aa). Positions 428–439 are enriched in basic and acidic residues; it reads TEAKLKREESKP. Threonine 480 carries the post-translational modification Phosphothreonine. Residues 494–506 show a composition bias toward basic and acidic residues; sequence KGKEGSSKDKKSA. Positions 525-540 are enriched in polar residues; sequence CTEQATVDTNSLQNGD. Residues 541-550 are compositionally biased toward basic and acidic residues; that stretch reads KLQKRPEKRQ. Serine 552 carries the phosphoserine modification. The interacts with DYNLL1 and DYNLL2 stretch occupies residues 565–584; the sequence is MLDAQVQTDPVSIGPVGKSK.

Homodimer. Interacts with DYNLL1 and DYNLL2. In terms of tissue distribution, highly expressed in the brain and, more specifically, in oligodendrocytes (at protein level). Expressed in the prostate, and at lower levels in testis, intestine and colon. Overexpressed in most breast cancer cell lines and down-regulated in some colorectal tumors.

Its subcellular location is the cytoplasm. In terms of biological role, required for myelination. This Homo sapiens (Human) protein is Breast carcinoma-amplified sequence 1 (BCAS1).